The following is a 388-amino-acid chain: S-adenosylmethionine synthase (388 aa).

Position 17 (His17) interacts with ATP. Residue Asp19 coordinates Mg(2+). K(+) is bound at residue Glu45. Residues Glu58 and Gln102 each contribute to the L-methionine site. A flexible loop region spans residues 102 to 112; sequence QSADIAQGVDA. ATP is bound by residues 167–169, 232–233, Asp241, 247–248, Ala264, and Lys268; these read DSK, RF, and RK. Asp241 contributes to the L-methionine binding site. Lys272 is a binding site for L-methionine.

The protein belongs to the AdoMet synthase family. As to quaternary structure, homotetramer; dimer of dimers. Requires Mg(2+) as cofactor. K(+) serves as cofactor.

It localises to the cytoplasm. The enzyme catalyses L-methionine + ATP + H2O = S-adenosyl-L-methionine + phosphate + diphosphate. Its pathway is amino-acid biosynthesis; S-adenosyl-L-methionine biosynthesis; S-adenosyl-L-methionine from L-methionine: step 1/1. Functionally, catalyzes the formation of S-adenosylmethionine (AdoMet) from methionine and ATP. The overall synthetic reaction is composed of two sequential steps, AdoMet formation and the subsequent tripolyphosphate hydrolysis which occurs prior to release of AdoMet from the enzyme. This Paramagnetospirillum magneticum (strain ATCC 700264 / AMB-1) (Magnetospirillum magneticum) protein is S-adenosylmethionine synthase.